A 208-amino-acid polypeptide reads, in one-letter code: LexA repressor (208 aa).

A DNA-binding region (H-T-H motif) is located at residues 29–49; it reads VREICSAVGLSSTSTVHGHIS. Catalysis depends on for autocatalytic cleavage activity residues Ser-129 and Lys-167.

This sequence belongs to the peptidase S24 family. Homodimer.

It carries out the reaction Hydrolysis of Ala-|-Gly bond in repressor LexA.. Functionally, represses a number of genes involved in the response to DNA damage (SOS response), including recA and lexA. In the presence of single-stranded DNA, RecA interacts with LexA causing an autocatalytic cleavage which disrupts the DNA-binding part of LexA, leading to derepression of the SOS regulon and eventually DNA repair. This chain is LexA repressor, found in Limosilactobacillus reuteri (strain DSM 20016) (Lactobacillus reuteri).